The following is a 462-amino-acid chain: Argininosuccinate lyase (462 aa).

The protein belongs to the lyase 1 family. Argininosuccinate lyase subfamily.

It is found in the cytoplasm. The enzyme catalyses 2-(N(omega)-L-arginino)succinate = fumarate + L-arginine. It functions in the pathway amino-acid biosynthesis; L-arginine biosynthesis; L-arginine from L-ornithine and carbamoyl phosphate: step 3/3. The sequence is that of Argininosuccinate lyase from Bacillus thuringiensis (strain Al Hakam).